Reading from the N-terminus, the 558-residue chain is Kelch-like protein 23 (558 aa).

The BTB domain maps to 36-104 (TDITLQCPSG…AYTSQIEITK (69 aa)). One can recognise a BACK domain in the interval 139 to 240 (CIGMHSFAEF…DPVYLKTALG (102 aa)). Kelch repeat units follow at residues 274-320 (TMYI…CLGP), 321-369 (NIYV…TLGG), 370-416 (CVYA…VLHD), 418-466 (IYVI…PFEN), 467-508 (KLYL…IMNG), and 510-557 (IYVT…CVYN).

In Homo sapiens (Human), this protein is Kelch-like protein 23 (KLHL23).